A 188-amino-acid chain; its full sequence is UPF0301 protein XAC2918 (188 aa).

It belongs to the UPF0301 (AlgH) family.

In Xanthomonas axonopodis pv. citri (strain 306), this protein is UPF0301 protein XAC2918.